The chain runs to 428 residues: MSYLIKNGFMLDEKGEKVQRDIRVEGDAISEIGSLEAASGETVIDADGLFVSPGLVDLHVHFREPGGEKKETIETGAKAAARGGFTTVAAMPNTRPVPDTKEQMEWLVNRIDETASVRVLPYASITIRQTGREMTDFEGLKDAGAFAFTDDGVGVQTAGMMYEAMKKAASINKAIVAHCEDNSLIYGGSVHDGEFAKANGLNGIPSVCEAVHIARDVLLAEAAGCHYHVCHISTKESVRVVRDAKKAGIRVTAEVTPHHLLLSDSDIPGLDTNYKMNPPLRSPEDREALLEGLRDGTIDFIATDHAPHTEEEKQQTMSLAPFGIVGLETAFPLLYTHFVKTGKWTLKQLHDYMTVKPCEAFGLPYGKLEAGRSADITLIDLEREEKIDKSTFLSKGKNTPFDGISCFGWPAMTMAKGKLVYQEGRLVK.

2 residues coordinate Zn(2+): histidine 59 and histidine 61. Residues 61–63 (HFR) and asparagine 93 contribute to the substrate site. Residues aspartate 151, histidine 178, and histidine 231 each contribute to the Zn(2+) site. Substrate is bound at residue asparagine 277. Residue aspartate 304 coordinates Zn(2+). The active site involves aspartate 304. Substrate is bound by residues histidine 308 and 322–323 (FG).

This sequence belongs to the metallo-dependent hydrolases superfamily. DHOase family. Class I DHOase subfamily. Requires Zn(2+) as cofactor.

It catalyses the reaction (S)-dihydroorotate + H2O = N-carbamoyl-L-aspartate + H(+). The protein operates within pyrimidine metabolism; UMP biosynthesis via de novo pathway; (S)-dihydroorotate from bicarbonate: step 3/3. Functionally, catalyzes the reversible cyclization of carbamoyl aspartate to dihydroorotate. The chain is Dihydroorotase from Bacillus licheniformis (strain ATCC 14580 / DSM 13 / JCM 2505 / CCUG 7422 / NBRC 12200 / NCIMB 9375 / NCTC 10341 / NRRL NRS-1264 / Gibson 46).